Here is a 255-residue protein sequence, read N- to C-terminus: Myb-related protein Zm38 (255 aa).

HTH myb-type domains are found at residues 9–61 and 62–116; these read KAHT…INYL and RPDL…RRKL. 2 consecutive DNA-binding regions (H-T-H motif) follow at residues 37–61 and 89–112; these read WRSLPKAAGLLRCGKSCRLRWINYL and WSLIAARLPGRTDNEIKNYWNTHV.

The protein resides in the nucleus. Its function is as follows. Transcription factor that negatively regulates genes involved in anthocyanin biosynthesis. This chain is Myb-related protein Zm38, found in Zea mays (Maize).